Here is a 480-residue protein sequence, read N- to C-terminus: UDP-N-acetylmuramate--L-alanine ligase (480 aa).

126–132 (GTHGKTT) serves as a coordination point for ATP.

It belongs to the MurCDEF family.

The protein resides in the cytoplasm. It catalyses the reaction UDP-N-acetyl-alpha-D-muramate + L-alanine + ATP = UDP-N-acetyl-alpha-D-muramoyl-L-alanine + ADP + phosphate + H(+). The protein operates within cell wall biogenesis; peptidoglycan biosynthesis. Its function is as follows. Cell wall formation. This is UDP-N-acetylmuramate--L-alanine ligase from Blochmanniella pennsylvanica (strain BPEN).